A 643-amino-acid polypeptide reads, in one-letter code: Threonine--tRNA ligase (643 aa).

The 61-residue stretch at 1-61 (MPIITLPDGS…EQDATLEIIT (61 aa)) folds into the TGS domain. The tract at residues 243 to 534 (DHRKIGKALD…ITEEYAGFFP (292 aa)) is catalytic. Zn(2+)-binding residues include Cys-334, His-385, and His-511.

Belongs to the class-II aminoacyl-tRNA synthetase family. Homodimer. It depends on Zn(2+) as a cofactor.

The protein resides in the cytoplasm. The catalysed reaction is tRNA(Thr) + L-threonine + ATP = L-threonyl-tRNA(Thr) + AMP + diphosphate + H(+). Functionally, catalyzes the attachment of threonine to tRNA(Thr) in a two-step reaction: L-threonine is first activated by ATP to form Thr-AMP and then transferred to the acceptor end of tRNA(Thr). Also edits incorrectly charged L-seryl-tRNA(Thr). In Haemophilus influenzae (strain 86-028NP), this protein is Threonine--tRNA ligase.